Consider the following 465-residue polypeptide: E3 ubiquitin-protein ligase TRIM15 (465 aa).

The RING-type zinc-finger motif lies at 16 to 61; the sequence is CTLCVGPLEDAVTAPCGHTFCRLCLPTLSQMGAQSSGKILLCPLCQ. The B box-type zinc-finger motif lies at 78–119; that stretch reads LGETYCEEHGEKIYFFCENDAEFLCVFCREGPTHQAHTVGFL. Positions 83, 86, 105, and 111 each coordinate Zn(2+). A coiled-coil region spans residues 126 to 229; sequence YRDRLRSRLE…VKELEEKCQQ (104 aa). Positions 276 to 465 constitute a B30.2/SPRY domain; sequence EMMRMFSENL…KKGSCLTLKG (190 aa).

This sequence belongs to the TRIM/RBCC family. In terms of assembly, interacts with paxillin/PXN; this interaction recruits TRIM15 to focal adhesions. Interacts with TRIM8; this interaction prevents TRIM8 cytoplasmic translocation.

It localises to the cytoplasm. It is found in the nucleus. Its subcellular location is the cell junction. The protein resides in the focal adhesion. It catalyses the reaction S-ubiquitinyl-[E2 ubiquitin-conjugating enzyme]-L-cysteine + [acceptor protein]-L-lysine = [E2 ubiquitin-conjugating enzyme]-L-cysteine + N(6)-ubiquitinyl-[acceptor protein]-L-lysine.. Functionally, E3 ubiquitin ligase that plays a role in several processes including innate antiviral immnity, cell migration and chemotaxis. Acts as a 'Lys-63'-specific ubiquitin ligase for MAPK1/ERK2 and MAPK3/ERK1, promoting their activation by facilitating their interaction with MAP2K1 and MAP2K2. Also plays a role in cell migration and chemotaxis by acting as a stable focal adhesion component upon recruitment by multi-adapter protein paxillin/PXN. Functions in the RIGI-mediated interferon induction pathway upstream or at the level of MAVS. Inhibits NF-kappa-B activation by turnover of 'Lys-63'-linked ubiquitination of MAP3K7/TAK1. Mechanistically, prevents TRIM8 cytoplasmic translocation and thus inhibits TRIM8-mediated 'Lys-63'-linked polyubiquitination of MAP3K7/TAK1 in the cytoplasm. Also has an important regulatory effect on the activation of hepatic stellate cells (HSCs). This Macaca mulatta (Rhesus macaque) protein is E3 ubiquitin-protein ligase TRIM15 (TRIM15).